The sequence spans 382 residues: Alkanesulfonate monooxygenase (382 aa).

The protein belongs to the SsuD family.

It carries out the reaction an alkanesulfonate + FMNH2 + O2 = an aldehyde + FMN + sulfite + H2O + 2 H(+). In terms of biological role, catalyzes the desulfonation of aliphatic sulfonates. In Ectopseudomonas mendocina (strain ymp) (Pseudomonas mendocina), this protein is Alkanesulfonate monooxygenase.